The following is a 258-amino-acid chain: Global transcriptional regulator CodY (258 aa).

Residues 1–156 (MSSLLTKTRM…SATIVGMEML (156 aa)) are GAF domain. The H-T-H motif DNA-binding region spans 204–223 (ASKIADKVGITRSVIVNALR).

The protein belongs to the CodY family.

Its subcellular location is the cytoplasm. DNA-binding global transcriptional regulator which is involved in the adaptive response to starvation and acts by directly or indirectly controlling the expression of numerous genes in response to nutrient availability. During rapid exponential growth, CodY is highly active and represses genes whose products allow adaptation to nutrient depletion. In Clostridium beijerinckii (strain ATCC 51743 / NCIMB 8052) (Clostridium acetobutylicum), this protein is Global transcriptional regulator CodY.